A 91-amino-acid chain; its full sequence is DNA-directed RNA polymerase subunit Rpo5 (91 aa).

The protein belongs to the archaeal Rpo5/eukaryotic RPB5 RNA polymerase subunit family. As to quaternary structure, part of the RNA polymerase complex.

The protein resides in the cytoplasm. It catalyses the reaction RNA(n) + a ribonucleoside 5'-triphosphate = RNA(n+1) + diphosphate. DNA-dependent RNA polymerase (RNAP) catalyzes the transcription of DNA into RNA using the four ribonucleoside triphosphates as substrates. This Staphylothermus marinus (strain ATCC 43588 / DSM 3639 / JCM 9404 / F1) protein is DNA-directed RNA polymerase subunit Rpo5.